Reading from the N-terminus, the 157-residue chain is Baculoviral IAP repeat-containing protein 5.2-B (157 aa).

A BIR repeat occupies Arg31–Ala101. Phosphothreonine; by CDK1 is present on Thr47. Zn(2+) contacts are provided by Cys70, Cys73, His90, and Cys97.

The protein belongs to the IAP family. In terms of assembly, component of the CPC at least composed of survivin/birc5, incenp, cdca8/borealin and/or cdca9/dasra-A, and aurkb/aurora-B. Interacts directly with incenp (via N-terminus). Interacts with rxra; the interaction is stronger in the absence of 9-cis retinoic acids. Ubiquitination is required for centrosome-targeting. In terms of tissue distribution, exhibits strong and homogeneous expression in developing oocytes. In embryos, expressed in the animal hemisphere from one-cell to yolk plug stages, and highly expressed in the future brain and dorsal region of the neural tube at the neurula stage and early tail-bud stage. At tadpole stages, expression is restricted at a low level to the head region.

The protein localises to the cytoplasm. Its subcellular location is the nucleus. It localises to the chromosome. The protein resides in the centromere. It is found in the cytoskeleton. The protein localises to the spindle. Does not appear to exhibit anti-apoptotic activity. Plays a role in increasing blood vessel size during development. Component of the chromosomal passenger complex (CPC), a complex that acts as a key regulator of mitosis. The CPC complex has essential functions at the centromere in ensuring correct chromosome alignment and segregation and is required for chromatin-induced microtubule stabilization and spindle assembly. The polypeptide is Baculoviral IAP repeat-containing protein 5.2-B (birc5.2-b) (Xenopus laevis (African clawed frog)).